Reading from the N-terminus, the 343-residue chain is MSSKKGNMNKKPLKKSYSLNGLSGTLDGTLETKVKDLIEEPLDAQNTLSDDYTNKSRRKYLKNIRQFKKSQNKTDTEKSGETNDSDYSDYSDNSDDVDDLDDVDDLNDPGNSKFSDCSDCLEDMDNYDNSDDELDLNETTNKSTNKILDKLNIKTTSFTKLNKSTKFNNPKITKTIPNKSNGKTTKKSTKNSNEIFKELIKKQLPDVPAQWKLNINDMKRICKYIDTSIFDKDHCCIWNGYITNINNSNKGTYVNFYFRNKKVALHRLLYSNFVAPLNSSEYLKFNCDNKGICCNINHYEKYKYSKNNVVVKKEPKNKEHKKEVKEVIIIGSDDPDKLIINFD.

Disordered regions lie at residues 1–25, 62–119, and 169–188; these read MSSKKGNMNKKPLKKSYSLNGLSGT, KNIR…DCSD, and NPKITKTIPNKSNGKTTKKS. Positions 62–71 are enriched in basic residues; sequence KNIRQFKKSQ. The span at 72–81 shows a compositional bias: basic and acidic residues; that stretch reads NKTDTEKSGE. Positions 83 to 107 are enriched in acidic residues; it reads NDSDYSDYSDNSDDVDDLDDVDDLN.

This is an uncharacterized protein from Acanthamoeba polyphaga (Amoeba).